We begin with the raw amino-acid sequence, 391 residues long: MSVINLLDLDLSSKRVLIRQDLNVSISNWIVTSDKRIKASLPTIKIALKQGAKVMLMSHRGRPIEGEPSDEFSLQPVADRLSELLNTTVRLEKDWLNGVQMNNGEVVLCENVRFNAGEMANDDNLSKRMALMCDIFVMDAFGTAHRAQASTHGVAKYAPIACSGPLLSGELDALGKVLDNPKRPMVAIVGGSKVSTKLTVLESLSKIVDQLVVGGGIANTFIAAQGFNVGKSLCEHDLIPMAKKLMEDCEIPVPTDVVCGKEFSETAEAQTKASTEVSDDDMIFDIGPESIKQLAKIMENAGTIVWNGPVGVFEFEQFASGTKTLGKAIAESDAFSIAGGGDTLAAVDKYGIEDKINYISTGGGAFLEFLEGKILPAVEILEQRASGVDFA.

Substrate is bound by residues 21–23 (DLN), Arg-36, 59–62 (HRGR), Arg-113, and Arg-146. ATP is bound by residues Lys-197, Glu-314, and 340–343 (GGDT).

This sequence belongs to the phosphoglycerate kinase family. Monomer.

The protein localises to the cytoplasm. The enzyme catalyses (2R)-3-phosphoglycerate + ATP = (2R)-3-phospho-glyceroyl phosphate + ADP. Its pathway is carbohydrate degradation; glycolysis; pyruvate from D-glyceraldehyde 3-phosphate: step 2/5. This is Phosphoglycerate kinase from Ruthia magnifica subsp. Calyptogena magnifica.